Consider the following 92-residue polypeptide: Exodeoxyribonuclease 7 small subunit (92 aa).

A disordered region spans residues 1–22 (MPKKNAISESTNSTPETAPAMT). Over residues 7 to 16 (ISESTNSTPE) the composition is skewed to polar residues.

Belongs to the XseB family. As to quaternary structure, heterooligomer composed of large and small subunits.

It is found in the cytoplasm. The enzyme catalyses Exonucleolytic cleavage in either 5'- to 3'- or 3'- to 5'-direction to yield nucleoside 5'-phosphates.. Its function is as follows. Bidirectionally degrades single-stranded DNA into large acid-insoluble oligonucleotides, which are then degraded further into small acid-soluble oligonucleotides. This is Exodeoxyribonuclease 7 small subunit from Photorhabdus laumondii subsp. laumondii (strain DSM 15139 / CIP 105565 / TT01) (Photorhabdus luminescens subsp. laumondii).